A 583-amino-acid chain; its full sequence is Sensor protein SrrB (583 aa).

The Cytoplasmic segment spans residues 1-11; sequence MMSRLNSVVIK. A helical transmembrane segment spans residues 12 to 32; sequence LWLTIILIVTTVLILLSIALI. At 33–174 the chain is on the extracellular side; sequence TFMQYYFTQE…SIEDTNNAIT (142 aa). The helical transmembrane segment at 175-195 threads the bilayer; that stretch reads IITIITAVIFLTITTVFAFFL. Residues 196–583 are Cytoplasmic-facing; sequence SSRITKPLRR…TFIIKLPKPE (388 aa). Residues 197 to 249 form the HAMP domain; that stretch reads SRITKPLRRLRDQATRVSEGDYSYKPSVTTKDEIGQLSQAFNQMSTEIEEHVD. In terms of domain architecture, Histidine kinase spans 366–583; sequence NVSHELRTPI…TFIIKLPKPE (218 aa). His369 carries the post-translational modification Phosphohistidine; by autocatalysis.

It is found in the cell membrane. It catalyses the reaction ATP + protein L-histidine = ADP + protein N-phospho-L-histidine.. Member of the two-component regulatory system SrrA/SrrB, which is involved in the global regulation of staphylococcal virulence factors in response to environmental oxygen levels as well as biofilm formation. Also plays an essential role in host-derived nitric oxide resistance by regulating hmp/flavohemoglobin, an enzyme that detoxifies nitric oxide by converting it to nitrate. Functions as a sensor protein kinase which is autophosphorylated at a histidine residue and transfers its phosphate group to SrrA. In turn, SrrA binds to the upstream promoter regions of the target genes to positively and negatively regulate their expression. The chain is Sensor protein SrrB (srrB) from Staphylococcus aureus.